A 539-amino-acid chain; its full sequence is uncharacterized protein (539 aa).

ABC transporter domains are found at residues 8-265 (VRIT…SRAL) and 307-537 (IELD…IGDM). Position 339–346 (339–346 (GDNGSGKS)) interacts with ATP.

Belongs to the ABC transporter superfamily.

It localises to the mitochondrion. This is an uncharacterized protein from Saccharomyces cerevisiae (strain ATCC 204508 / S288c) (Baker's yeast).